Here is a 191-residue protein sequence, read N- to C-terminus: Protein GrpE (191 aa).

A disordered region spans residues 1-49 (MSEEKQTAEQVEAAEQEEVTEQAEQAASQEQHEETAGQEEALQHQIDEL). Acidic residues predominate over residues 12–21 (EAAEQEEVTE). Basic and acidic residues predominate over residues 30–49 (EQHEETAGQEEALQHQIDEL).

Belongs to the GrpE family. As to quaternary structure, homodimer.

It is found in the cytoplasm. Participates actively in the response to hyperosmotic and heat shock by preventing the aggregation of stress-denatured proteins, in association with DnaK and GrpE. It is the nucleotide exchange factor for DnaK and may function as a thermosensor. Unfolded proteins bind initially to DnaJ; upon interaction with the DnaJ-bound protein, DnaK hydrolyzes its bound ATP, resulting in the formation of a stable complex. GrpE releases ADP from DnaK; ATP binding to DnaK triggers the release of the substrate protein, thus completing the reaction cycle. Several rounds of ATP-dependent interactions between DnaJ, DnaK and GrpE are required for fully efficient folding. The sequence is that of Protein GrpE from Bacillus velezensis (strain DSM 23117 / BGSC 10A6 / LMG 26770 / FZB42) (Bacillus amyloliquefaciens subsp. plantarum).